The sequence spans 374 residues: Mannitol-1-phosphate 5-dehydrogenase (374 aa).

An NAD(+)-binding site is contributed by 3-14; sequence AIHFGAGNIGRG.

It belongs to the mannitol dehydrogenase family.

The catalysed reaction is D-mannitol 1-phosphate + NAD(+) = beta-D-fructose 6-phosphate + NADH + H(+). The chain is Mannitol-1-phosphate 5-dehydrogenase from Halalkalibacterium halodurans (strain ATCC BAA-125 / DSM 18197 / FERM 7344 / JCM 9153 / C-125) (Bacillus halodurans).